A 296-amino-acid polypeptide reads, in one-letter code: tRNA pseudouridine synthase B (296 aa).

The active-site Nucleophile is D38.

It belongs to the pseudouridine synthase TruB family. Type 1 subfamily.

The enzyme catalyses uridine(55) in tRNA = pseudouridine(55) in tRNA. Its function is as follows. Responsible for synthesis of pseudouridine from uracil-55 in the psi GC loop of transfer RNAs. The protein is tRNA pseudouridine synthase B of Ehrlichia ruminantium (strain Gardel).